Reading from the N-terminus, the 634-residue chain is Bacteriophytochrome (634 aa).

Cys-13 is a biliverdin IXalpha binding site. The region spanning 13 to 118 is the PAS 1 domain; it reads CAREPIHIPG…YPQQWLVEME (106 aa). The tract at residues 13–514 is photosensory core domain; the sequence is CAREPIHIPG…ELMERKRFQQ (502 aa). The GAF domain maps to 151-305; the sequence is RVAKGLRSLI…VTDAVARTLA (155 aa). The segment at 325-508 is phytochrome-specific (PHY); the sequence is TVREKLITDF…SLRVLIELME (184 aa). The interval 452–480 is tongue domain; the sequence is WAGNPQLAKLEDIPNSRLSPRKSFDLWQQ. Residues 515–590 form the PAS 2 domain; that stretch reads DFTLLEASLS…ELLQDALRNG (76 aa). Residues 515–634 form a PAS9, output module, not required to bind biliverdin IX-alpha, required for dimerization region; sequence DFTLLEASLS…HWLLQLRDPE (120 aa).

It in the N-terminal section; belongs to the phytochrome family. Forms head-to-head homodimers. In terms of processing, contains one covalently linked biliverdin IX-alpha chromophore; present in the crystal structure as a mixture of Pr and Meta-R configurations.

Photoreceptor which exists in two forms that are reversibly interconvertible by light: far-red light (733 nm) converts protein to the red-absorbing (Pr) form, while red light (630 nm) partly converts the protein to the far-red-absorbing (Pfr) form. Regulates virulence of X.campestris pv. campestris on its host plants, perhaps by fine-tuning expression to ambient light levels and/or spatial cues. The Pr form may sense light and partially inhibit virulence; in the dark (Pfr form) biofilm and xanathan production rise and bacteria are more virulent. Strains overexpressing this protein have significantly decreased amounts of extracellular beta-1,4-endoglucanase, produce less xanthin and have decreased transcription of genes involved in virulence such as endoglucanases, type 2 secretion systems, xanthan production and flagellar-dependent motility. This Xanthomonas campestris pv. campestris (strain 8004) protein is Bacteriophytochrome (bphP).